Consider the following 234-residue polypeptide: 2-hydroxy-3-keto-5-methylthiopentenyl-1-phosphate phosphatase (234 aa).

It belongs to the HAD-like hydrolase superfamily. MtnX family.

The enzyme catalyses 2-hydroxy-5-methylsulfanyl-3-oxopent-1-enyl phosphate + H2O = 1,2-dihydroxy-5-(methylsulfanyl)pent-1-en-3-one + phosphate. The protein operates within amino-acid biosynthesis; L-methionine biosynthesis via salvage pathway; L-methionine from S-methyl-5-thio-alpha-D-ribose 1-phosphate: step 4/6. Dephosphorylates 2-hydroxy-3-keto-5-methylthiopentenyl-1-phosphate (HK-MTPenyl-1-P) yielding 1,2-dihydroxy-3-keto-5-methylthiopentene (DHK-MTPene). This Bacillus velezensis (strain DSM 23117 / BGSC 10A6 / LMG 26770 / FZB42) (Bacillus amyloliquefaciens subsp. plantarum) protein is 2-hydroxy-3-keto-5-methylthiopentenyl-1-phosphate phosphatase.